An 85-amino-acid polypeptide reads, in one-letter code: U4-theraphotoxin-Hhn1a (85 aa).

Positions 1-22 are cleaved as a signal peptide; the sequence is MKVTLIAILTCAAVLVLHTTAA. The propeptide occupies 23–48; that stretch reads EELEAESQLMEVGMPDTELEAVDEER. Disulfide bonds link cysteine 52–cysteine 66, cysteine 56–cysteine 77, and cysteine 71–cysteine 82.

The protein belongs to the neurotoxin 12 (Hwtx-2) family. 02 (Hwtx-2) subfamily. As to quaternary structure, monomer. Expressed by the venom gland.

It localises to the secreted. Its function is as follows. Neurotoxin active on both insects and mammals. This Cyriopagopus hainanus (Chinese bird spider) protein is U4-theraphotoxin-Hhn1a.